A 523-amino-acid polypeptide reads, in one-letter code: Ribonuclease Y (523 aa).

Residues 18-38 (WSLTVALVIGGALGFLVVWAF) form a helical membrane-spanning segment. The region spanning 213-276 (TSTIVSLPNE…EVARGALEAL (64 aa)) is the KH domain. The HD domain occupies 339–432 (VLDHSVETAS…VILADTISAT (94 aa)).

It belongs to the RNase Y family.

Its subcellular location is the cell membrane. Endoribonuclease that initiates mRNA decay. This is Ribonuclease Y from Opitutus terrae (strain DSM 11246 / JCM 15787 / PB90-1).